Consider the following 102-residue polypeptide: Large ribosomal subunit protein bL21 (102 aa).

It belongs to the bacterial ribosomal protein bL21 family. As to quaternary structure, part of the 50S ribosomal subunit. Contacts protein L20.

In terms of biological role, this protein binds to 23S rRNA in the presence of protein L20. The chain is Large ribosomal subunit protein bL21 from Bacillus subtilis (strain 168).